Here is a 352-residue protein sequence, read N- to C-terminus: DNA polymerase IV (352 aa).

A UmuC domain is found at 4-185; sequence IIHVDMDCFF…LPLSKIPGVG (182 aa). Positions 8 and 103 each coordinate Mg(2+). Residue glutamate 104 is part of the active site.

It belongs to the DNA polymerase type-Y family. In terms of assembly, monomer. Mg(2+) serves as cofactor.

It localises to the cytoplasm. The catalysed reaction is DNA(n) + a 2'-deoxyribonucleoside 5'-triphosphate = DNA(n+1) + diphosphate. Poorly processive, error-prone DNA polymerase involved in untargeted mutagenesis. Copies undamaged DNA at stalled replication forks, which arise in vivo from mismatched or misaligned primer ends. These misaligned primers can be extended by PolIV. Exhibits no 3'-5' exonuclease (proofreading) activity. May be involved in translesional synthesis, in conjunction with the beta clamp from PolIII. This is DNA polymerase IV from Yersinia pestis bv. Antiqua (strain Antiqua).